We begin with the raw amino-acid sequence, 258 residues long: Hydroxyacylglutathione hydrolase (258 aa).

Zn(2+) is bound by residues His55, His57, Asp59, His60, His115, Asp132, and His170.

The protein belongs to the metallo-beta-lactamase superfamily. Glyoxalase II family. Monomer. It depends on Zn(2+) as a cofactor.

The catalysed reaction is an S-(2-hydroxyacyl)glutathione + H2O = a 2-hydroxy carboxylate + glutathione + H(+). The protein operates within secondary metabolite metabolism; methylglyoxal degradation; (R)-lactate from methylglyoxal: step 2/2. Its function is as follows. Thiolesterase that catalyzes the hydrolysis of S-D-lactoyl-glutathione to form glutathione and D-lactic acid. The sequence is that of Hydroxyacylglutathione hydrolase from Shewanella halifaxensis (strain HAW-EB4).